The chain runs to 181 residues: Protein Syd (181 aa).

The protein belongs to the Syd family.

It is found in the cell inner membrane. Interacts with the SecY protein in vivo. May bind preferentially to an uncomplexed state of SecY, thus functioning either as a chelating agent for excess SecY in the cell or as a regulatory factor that negatively controls the translocase function. The chain is Protein Syd from Klebsiella pneumoniae (strain 342).